A 242-amino-acid polypeptide reads, in one-letter code: MAKVALVTGGSRGIGAAISKALKEAGYTVAANYAGNDDAARAFTEETGIKTYKWSVADYDACAAGIKQVEEELGPIAVLVNNAGITRDAMFHKMTPQQWKEVIDTNLTGLFNMTHPVWSGMRDRKYGRIVNISSINGQKGQAGQANYSAAKAGDLGFTKALAQEGARAGITVNAICPGYIGTEMVRAIDEKVLNEGIIPQIPVAAWAEPEEIARCVVFLASEDAGFITGSTHQAPNGGQFFV.

NADP(+) contacts are provided by residues 12–14 (RGI) and 82–86 (NAGIT). Substrate is bound by residues D88 and 141–144 (QAGQ). Y147 (proton acceptor) is an active-site residue. Residue 177–180 (PGYI) coordinates NADP(+). Substrate is bound at residue 178–179 (GY).

It belongs to the short-chain dehydrogenases/reductases (SDR) family.

It is found in the cytoplasm. It catalyses the reaction a (3R)-3-hydroxyacyl-CoA + NADP(+) = a 3-oxoacyl-CoA + NADPH + H(+). It participates in biopolymer metabolism; poly-(R)-3-hydroxybutanoate biosynthesis. In Paracoccus denitrificans, this protein is Acetoacetyl-CoA reductase (phaB).